A 753-amino-acid polypeptide reads, in one-letter code: MPYRVATGYSEKSTDDDLIWRTPIVKEELEDADNFLKDDAELYDKVKNESAVSHLDTIVMPIIFTVLGMFTRMYKIGRNNHVVWDEAHFGKFGSYYLRHEFYHDVHPPLGKMLVGLSGYLAGYNGSWDFPSGEVYPDYIDYVKMRLFQAMFSSLCVPLAYFTGRAIGFSRLSVWLFTILVIFENSYATLGKFILLDSMLLFFTVSSYFCLAKFHTMRKSPFSARWWLWLCLTGLNLGCAISVKMVGLFIISVVGIYTISELWNLLSDRSVSWKVYVNHWLARIFGLIIIPVCVFLLCFKIHFDLLSNSGPGDSTMPSLFQASLNGTKVGKGPRDVALGSSIISIKNQALGGALLHSHVQPFPEGSEQQQVTVYGYSDANNEWFFQRIRGVEPWTDAENKTIEFVKGGEMYRLMHRLTGKNLHTHEVPAPISKSEYEVSAYGDVDLGDYKDNWIIEIVEQVGEEDPTLLHPLSTSFRIKNSILGCYLAQSGKHLPEWGFRQGEVVCLKHASKRDKRTWWNIETHENERLPQGEDFVYPKTSFFRNFMQLNSAMMATNNALVPNPEKFDGIASSAWQWPTLNVGVRLCEWSEKSIKYFLLGSPASVWPSSIAVCALIIHVIFLTLKWQRQCVILSDPVERDVFVMAAFYPLLAWLLHYMPFVVMSRVVYAHHYLPTLYFALMILSYYFDMITKRWATRNTGKFLRLGAYIVYGSIVIAGFFYFSPFSFGMDGPVDDYAYLAWLPTWQIVEDIRNT.

Residues 1–50 (MPYRVATGYSEKSTDDDLIWRTPIVKEELEDADNFLKDDAELYDKVKNES) lie on the Cytoplasmic side of the membrane. The helical transmembrane segment at 51–71 (AVSHLDTIVMPIIFTVLGMFT) threads the bilayer. The Lumenal segment spans residues 72–148 (RMYKIGRNNH…IDYVKMRLFQ (77 aa)). N124 carries an N-linked (GlcNAc...) asparagine glycan. A helical membrane pass occupies residues 149 to 169 (AMFSSLCVPLAYFTGRAIGFS). Residues 170 to 174 (RLSVW) lie on the Cytoplasmic side of the membrane. The chain crosses the membrane as a helical span at residues 175 to 195 (LFTILVIFENSYATLGKFILL). The Lumenal portion of the chain corresponds to 196-235 (DSMLLFFTVSSYFCLAKFHTMRKSPFSARWWLWLCLTGLN). The helical transmembrane segment at 236–256 (LGCAISVKMVGLFIISVVGIY) threads the bilayer. At 257–282 (TISELWNLLSDRSVSWKVYVNHWLAR) the chain is on the cytoplasmic side. A helical transmembrane segment spans residues 283–303 (IFGLIIIPVCVFLLCFKIHFD). Residues 304-602 (LLSNSGPGDS…IKYFLLGSPA (299 aa)) are Lumenal-facing. An N-linked (GlcNAc...) asparagine glycan is attached at N324. The MIR 1 domain maps to 332–387 (PRDVALGSSIISIKNQALGGALLHSHVQPFPEGSEQQQVTVYGYSDANNEWFFQRI). The N-linked (GlcNAc...) asparagine glycan is linked to N398. MIR domains lie at 401–457 (IEFV…IEIV) and 465–523 (PTLL…IETH). Residues 603 to 623 (SVWPSSIAVCALIIHVIFLTL) form a helical membrane-spanning segment. Topologically, residues 624-639 (KWQRQCVILSDPVERD) are cytoplasmic. A helical membrane pass occupies residues 640–660 (VFVMAAFYPLLAWLLHYMPFV). Residues 661–665 (VMSRV) lie on the Lumenal side of the membrane. Residues 666-686 (VYAHHYLPTLYFALMILSYYF) traverse the membrane as a helical segment. Residues 687-703 (DMITKRWATRNTGKFLR) lie on the Cytoplasmic side of the membrane. The helical transmembrane segment at 704 to 724 (LGAYIVYGSIVIAGFFYFSPF) threads the bilayer. Residues 725-753 (SFGMDGPVDDYAYLAWLPTWQIVEDIRNT) lie on the Lumenal side of the membrane.

The protein belongs to the glycosyltransferase 39 family. In terms of assembly, PMT3 and PMT5 form a functional heterodimer. Also forms a minor complex with PMT1.

It localises to the endoplasmic reticulum membrane. It catalyses the reaction a di-trans,poly-cis-dolichyl beta-D-mannosyl phosphate + L-seryl-[protein] = 3-O-(alpha-D-mannosyl)-L-seryl-[protein] + a di-trans,poly-cis-dolichyl phosphate + H(+). The enzyme catalyses a di-trans,poly-cis-dolichyl beta-D-mannosyl phosphate + L-threonyl-[protein] = 3-O-(alpha-D-mannosyl)-L-threonyl-[protein] + a di-trans,poly-cis-dolichyl phosphate + H(+). The protein operates within protein modification; protein glycosylation. Its function is as follows. Protein O-mannosyltransferase involved in O-glycosylation which is essential for cell wall rigidity. Forms a heterodimeric complex with PMT5 and more rarely with PMT1 to transfer mannose from Dol-P-mannose to Ser or Thr residues on proteins. Seems to have redundant activity to PMT2. The protein is Dolichyl-phosphate-mannose--protein mannosyltransferase 3 of Saccharomyces cerevisiae (strain ATCC 204508 / S288c) (Baker's yeast).